The primary structure comprises 259 residues: tRNA (guanine-N(7)-)-methyltransferase (259 aa).

Residues 1 to 73 (MGHHGQMHAQ…GPAEDPDRPG (73 aa)) are disordered. Residues E91, E116, N143, and D166 each contribute to the S-adenosyl-L-methionine site. The active site involves D166. Residues K170, D202, and 238–241 (TKYE) each bind substrate.

The protein belongs to the class I-like SAM-binding methyltransferase superfamily. TrmB family.

It carries out the reaction guanosine(46) in tRNA + S-adenosyl-L-methionine = N(7)-methylguanosine(46) in tRNA + S-adenosyl-L-homocysteine. It functions in the pathway tRNA modification; N(7)-methylguanine-tRNA biosynthesis. Its function is as follows. Catalyzes the formation of N(7)-methylguanine at position 46 (m7G46) in tRNA. This chain is tRNA (guanine-N(7)-)-methyltransferase, found in Mycolicibacterium paratuberculosis (strain ATCC BAA-968 / K-10) (Mycobacterium paratuberculosis).